The chain runs to 367 residues: Alanine racemase (367 aa).

Lys40 functions as the Proton acceptor; specific for D-alanine in the catalytic mechanism. An N6-(pyridoxal phosphate)lysine modification is found at Lys40. A substrate-binding site is contributed by Arg136. Tyr263 (proton acceptor; specific for L-alanine) is an active-site residue. Met310 serves as a coordination point for substrate.

This sequence belongs to the alanine racemase family. The cofactor is pyridoxal 5'-phosphate.

The catalysed reaction is L-alanine = D-alanine. Its pathway is amino-acid biosynthesis; D-alanine biosynthesis; D-alanine from L-alanine: step 1/1. Functionally, catalyzes the interconversion of L-alanine and D-alanine. May also act on other amino acids. The polypeptide is Alanine racemase (alr) (Streptococcus pneumoniae (strain 70585)).